The following is a 140-amino-acid chain: Large ribosomal subunit protein bL17 (140 aa).

Belongs to the bacterial ribosomal protein bL17 family. As to quaternary structure, part of the 50S ribosomal subunit. Contacts protein L32.

The sequence is that of Large ribosomal subunit protein bL17 from Rhizobium etli (strain CIAT 652).